The chain runs to 243 residues: DNA repair protein RecO (243 aa).

The protein belongs to the RecO family.

Its function is as follows. Involved in DNA repair and RecF pathway recombination. This chain is DNA repair protein RecO, found in Caulobacter sp. (strain K31).